The chain runs to 1027 residues: Presequence protease, mitochondrial (1027 aa).

The transit peptide at 1–22 (MIRQCRAGLRLCRALYQTSYRW) directs the protein to the mitochondrion. Residue histidine 98 coordinates Zn(2+). Glutamate 101 functions as the Proton acceptor in the catalytic mechanism. Zn(2+)-binding residues include histidine 102 and glutamate 199. Cysteine 113 and cysteine 550 are joined by a disulfide. The disordered stretch occupies residues 800–829 (KKERKSIRPHVVEKSSSPSSSGSEISRRAT). Residues 814–823 (SSSPSSSGSE) show a composition bias toward low complexity.

Belongs to the peptidase M16 family. PreP subfamily. Monomer and homodimer; homodimerization is induced by binding of the substrate. Zn(2+) is required as a cofactor. In terms of processing, a disulfide bond locks the enzyme in the closed conformation preventing substrate entry into the catalytic chamber.

The protein resides in the mitochondrion matrix. Mainly exists in a closed and catalytically competent conformation but a closed-to-open switch allows substrate entry into the catalytic chamber. Substrate binding induces closure and dimerization. A disulfide bond may lock the enzyme in a closed conformation preventing substrate entry into the catalytic chamber, participating in redox regulation of the enzyme. Inhibited by metal-chelating agents. Inhibited by nickel and zinc excess, and slightly activated by manganese. In terms of biological role, metalloendopeptidase of the mitochondrial matrix that functions in peptide cleavage and degradation rather than in protein processing. Has an ATP-independent activity. Specifically cleaves peptides in the range of 5 to 65 residues. Shows a preference for cleavage after small polar residues and before basic residues, but without any positional preference. Degrades the transit peptides of mitochondrial proteins after their cleavage. Also degrades other unstructured peptides. The sequence is that of Presequence protease, mitochondrial (pitrm1) from Xenopus tropicalis (Western clawed frog).